The primary structure comprises 948 residues: Isoleucine--tRNA ligase (948 aa).

A 'HIGH' region motif is present at residues P58 to H68. E572 contacts L-isoleucyl-5'-AMP. The 'KMSKS' region motif lies at K613–S617. Residue K616 coordinates ATP. Zn(2+) is bound by residues C911, C914, C931, and C934.

It belongs to the class-I aminoacyl-tRNA synthetase family. IleS type 1 subfamily. In terms of assembly, monomer. Zn(2+) is required as a cofactor.

The protein localises to the cytoplasm. The enzyme catalyses tRNA(Ile) + L-isoleucine + ATP = L-isoleucyl-tRNA(Ile) + AMP + diphosphate. Catalyzes the attachment of isoleucine to tRNA(Ile). As IleRS can inadvertently accommodate and process structurally similar amino acids such as valine, to avoid such errors it has two additional distinct tRNA(Ile)-dependent editing activities. One activity is designated as 'pretransfer' editing and involves the hydrolysis of activated Val-AMP. The other activity is designated 'posttransfer' editing and involves deacylation of mischarged Val-tRNA(Ile). The protein is Isoleucine--tRNA ligase of Edwardsiella ictaluri (strain 93-146).